An 81-amino-acid chain; its full sequence is Photosystem I iron-sulfur center (81 aa).

4Fe-4S ferredoxin-type domains lie at 2–31 (SHSV…MIPW) and 39–68 (IASA…VRVS). [4Fe-4S] cluster is bound by residues cysteine 11, cysteine 14, cysteine 17, cysteine 21, cysteine 48, cysteine 51, cysteine 54, and cysteine 58.

As to quaternary structure, the eukaryotic PSI reaction center is composed of at least 11 subunits. It depends on [4Fe-4S] cluster as a cofactor.

It localises to the plastid. Its subcellular location is the chloroplast thylakoid membrane. The catalysed reaction is reduced [plastocyanin] + hnu + oxidized [2Fe-2S]-[ferredoxin] = oxidized [plastocyanin] + reduced [2Fe-2S]-[ferredoxin]. Functionally, apoprotein for the two 4Fe-4S centers FA and FB of photosystem I (PSI); essential for photochemical activity. FB is the terminal electron acceptor of PSI, donating electrons to ferredoxin. The C-terminus interacts with PsaA/B/D and helps assemble the protein into the PSI complex. Required for binding of PsaD and PsaE to PSI. PSI is a plastocyanin-ferredoxin oxidoreductase, converting photonic excitation into a charge separation, which transfers an electron from the donor P700 chlorophyll pair to the spectroscopically characterized acceptors A0, A1, FX, FA and FB in turn. The polypeptide is Photosystem I iron-sulfur center (Daucus carota (Wild carrot)).